The sequence spans 254 residues: UPF0246 protein FTH_1656 (254 aa).

This sequence belongs to the UPF0246 family.

This Francisella tularensis subsp. holarctica (strain OSU18) protein is UPF0246 protein FTH_1656.